We begin with the raw amino-acid sequence, 570 residues long: MAFRGWRPPPPPLLLLLLWVTGQAAPVAGLGSDAELQIERRFVPDECPRTVRSGDFVRYHYVGTFPDGQKFDSSYDRDSTFNVFVGKGQLITGMDQALVGMCVNERRFVKIPPKLAYGNEGVSGVIPPNSVLHFDVLLMDIWNSEDQVQIHTYFKPPSCPRTIQVSDFVRYHYNGTFLDGTLFDSSHNRMKTYDTYVGIGWLIPGMDKGLLGMCVGEKRIITIPPFLAYGEDGDGKDIPGQASLVFDVALLDLHNPKDSISIENKVVPENCERISQSGDFLRYHYNGTLLDGTLFDSSYSRNRTFDTYIGQGYVIPGMDEGLLGVCIGEKRRIVVPPHLGYGEEGRGNIPGSAVLVFDIHVIDFHNPSDSISITSHYKPPDCSVLSKKGDYLKYHYNASLLDGTLLDSTWNLGKTYNIVLGSGQVVLGMDMGLREMCVGEKRTVIIPPHLGYGEAGVDGEVPGSAVLVFDIELLELVAGLPEGYMFIWNGEVSPNLFEEIDKDGNGEVLLEEFSEYIHAQVASGKGKLAPGFDAELIVKNMFTNQDRNGDGKVTAEEFKLKDQEAKHDEL.

An N-terminal signal peptide occupies residues 1 to 24 (MAFRGWRPPPPPLLLLLLWVTGQA). PPIase FKBP-type domains are found at residues 54–142 (GDFV…MDIW), 166–254 (SDFV…LDLH), 278–365 (GDFL…IDFH), and 389–477 (GDYL…LELV). 4 N-linked (GlcNAc...) asparagine glycosylation sites follow: Asn174, Asn286, Asn302, and Asn397. EF-hand domains are found at residues 488 to 523 (WNGE…QVAS) and 533 to 568 (DAEL…AKHD). The Ca(2+) site is built by Asp501, Asp503, Asn505, Glu507, Glu512, Asp546, Asn548, Asp550, Lys552, and Glu557. Positions 567–570 (HDEL) match the Prevents secretion from ER motif.

Post-translationally, phosphorylated.

It is found in the endoplasmic reticulum. The catalysed reaction is [protein]-peptidylproline (omega=180) = [protein]-peptidylproline (omega=0). With respect to regulation, inhibited by FK506. Functionally, PPIases accelerate the folding of proteins during protein synthesis. The protein is Peptidyl-prolyl cis-trans isomerase FKBP9 (FKBP9) of Homo sapiens (Human).